We begin with the raw amino-acid sequence, 282 residues long: 1-deoxy-11-beta-hydroxypentalenate dehydrogenase (282 aa).

12-36 lines the NAD(+) pocket; that stretch reads GAASGIGLALSARFARAGAGVVMAD. Substrate is bound at residue Ser-144. Tyr-157 serves as the catalytic Proton acceptor. Lys-161 contacts NAD(+). A disordered region spans residues 258–282; the sequence is PPPSPEEELWPVPKTTTATTATTKH. Positions 267 to 282 are enriched in low complexity; it reads WPVPKTTTATTATTKH.

Belongs to the short-chain dehydrogenases/reductases (SDR) family.

It carries out the reaction 1-deoxy-11beta-hydroxypentalenate + NAD(+) = 1-deoxy-11-oxopentalenate + NADH + H(+). It functions in the pathway antibiotic biosynthesis; pentalenolactone biosynthesis. Catalyzes the oxidation of 1-deoxy-11-beta-hydroxypentalenic acid to 1-deoxy-11-oxopentalenic acid in the biosynthesis of pentalenolactone antibiotic. The polypeptide is 1-deoxy-11-beta-hydroxypentalenate dehydrogenase (pntF) (Streptomyces arenae).